Reading from the N-terminus, the 135-residue chain is Endoribonuclease YbeY (135 aa).

Positions 94, 98, and 104 each coordinate Zn(2+).

This sequence belongs to the endoribonuclease YbeY family. Zn(2+) is required as a cofactor.

It localises to the cytoplasm. In terms of biological role, single strand-specific metallo-endoribonuclease involved in late-stage 70S ribosome quality control and in maturation of the 3' terminus of the 16S rRNA. In Campylobacter jejuni subsp. jejuni serotype O:2 (strain ATCC 700819 / NCTC 11168), this protein is Endoribonuclease YbeY.